Consider the following 500-residue polypeptide: Probable cytosol aminopeptidase (500 aa).

2 residues coordinate Mn(2+): Lys264 and Asp269. Lys276 is a catalytic residue. Mn(2+) is bound by residues Asp287, Asp346, and Glu348. Residue Arg350 is part of the active site.

It belongs to the peptidase M17 family. The cofactor is Mn(2+).

It is found in the cytoplasm. The enzyme catalyses Release of an N-terminal amino acid, Xaa-|-Yaa-, in which Xaa is preferably Leu, but may be other amino acids including Pro although not Arg or Lys, and Yaa may be Pro. Amino acid amides and methyl esters are also readily hydrolyzed, but rates on arylamides are exceedingly low.. It carries out the reaction Release of an N-terminal amino acid, preferentially leucine, but not glutamic or aspartic acids.. Its function is as follows. Presumably involved in the processing and regular turnover of intracellular proteins. Catalyzes the removal of unsubstituted N-terminal amino acids from various peptides. The protein is Probable cytosol aminopeptidase of Rhodopseudomonas palustris (strain BisB5).